A 262-amino-acid polypeptide reads, in one-letter code: Small ribosomal subunit protein eS4 (262 aa).

The S4 RNA-binding domain occupies 42-104; that stretch reads LPLILILRNR…TNEDFRLLYD (63 aa).

Belongs to the eukaryotic ribosomal protein eS4 family.

The protein resides in the cytoplasm. The protein is Small ribosomal subunit protein eS4 (RPS4) of Gossypium hirsutum (Upland cotton).